A 729-amino-acid polypeptide reads, in one-letter code: Phosphoribosylformylglycinamidine synthase subunit PurL (729 aa).

The active site involves histidine 54. Positions 57 and 96 each coordinate ATP. Glutamate 98 contacts Mg(2+). Substrate is bound by residues 99–102 (SHNH) and arginine 121. Residue histidine 100 is the Proton acceptor of the active site. Position 122 (aspartate 122) interacts with Mg(2+). Glutamine 245 lines the substrate pocket. Residue aspartate 273 participates in Mg(2+) binding. 317–319 (ETQ) contributes to the substrate binding site. ATP contacts are provided by aspartate 495 and glycine 532. Asparagine 533 is a binding site for Mg(2+). Serine 535 contacts substrate.

It belongs to the FGAMS family. As to quaternary structure, monomer. Part of the FGAM synthase complex composed of 1 PurL, 1 PurQ and 2 PurS subunits.

The protein localises to the cytoplasm. It carries out the reaction N(2)-formyl-N(1)-(5-phospho-beta-D-ribosyl)glycinamide + L-glutamine + ATP + H2O = 2-formamido-N(1)-(5-O-phospho-beta-D-ribosyl)acetamidine + L-glutamate + ADP + phosphate + H(+). It functions in the pathway purine metabolism; IMP biosynthesis via de novo pathway; 5-amino-1-(5-phospho-D-ribosyl)imidazole from N(2)-formyl-N(1)-(5-phospho-D-ribosyl)glycinamide: step 1/2. Functionally, part of the phosphoribosylformylglycinamidine synthase complex involved in the purines biosynthetic pathway. Catalyzes the ATP-dependent conversion of formylglycinamide ribonucleotide (FGAR) and glutamine to yield formylglycinamidine ribonucleotide (FGAM) and glutamate. The FGAM synthase complex is composed of three subunits. PurQ produces an ammonia molecule by converting glutamine to glutamate. PurL transfers the ammonia molecule to FGAR to form FGAM in an ATP-dependent manner. PurS interacts with PurQ and PurL and is thought to assist in the transfer of the ammonia molecule from PurQ to PurL. The sequence is that of Phosphoribosylformylglycinamidine synthase subunit PurL from Staphylococcus aureus (strain Mu3 / ATCC 700698).